The sequence spans 226 residues: UPF0173 metal-dependent hydrolase TM_1162 (226 aa).

It belongs to the UPF0173 family.

The chain is UPF0173 metal-dependent hydrolase TM_1162 from Thermotoga maritima (strain ATCC 43589 / DSM 3109 / JCM 10099 / NBRC 100826 / MSB8).